The primary structure comprises 216 residues: Capsule polysaccharide export ATP-binding protein CtrD (216 aa).

One can recognise an ABC transporter domain in the interval isoleucine 2–leucine 215. Glycine 38–serine 45 is a binding site for ATP.

Belongs to the ABC transporter superfamily.

The protein resides in the cell inner membrane. It catalyses the reaction ATP + H2O + capsular polysaccharide-[capsular polysaccharide-binding protein]Side 1 = ADP + phosphate + capsular polysaccharideSide 2 + [capsular polysaccharide-binding protein]Side 1.. In terms of biological role, putative ATP-binding protein, and an energy-coupling component of capsule polysaccharide export apparatus. This Neisseria meningitidis serogroup B (strain ATCC BAA-335 / MC58) protein is Capsule polysaccharide export ATP-binding protein CtrD (ctrD).